A 293-amino-acid polypeptide reads, in one-letter code: MAAITASMVAELRAKTDAPMMECKKALTEADGDMARAEELLRVKLGNKASKAASRVTAEGVIASFIEGGAGAIVELNCETDFVSKNDDFIGFSKKVAELVVKQNPADVGALSALALDGSTVDAVRSALVGKIGENLSIRRFARFETSNKLAAYLHGTRIGVLVEYTGADEQVGKDVAMHIAAMKPVSLSSDDVPADLIAKERSIAEQKAAESGKPAEIVAKMVDGSVQKYLKEVSLLNQPFVKNDKQTIEQMLKAANASVQNFALFVVGEGIEKRQDDFAAEVAAQVAAAKQQ.

The segment at 80 to 83 is involved in Mg(2+) ion dislocation from EF-Tu; it reads TDFV.

It belongs to the EF-Ts family.

The protein resides in the cytoplasm. In terms of biological role, associates with the EF-Tu.GDP complex and induces the exchange of GDP to GTP. It remains bound to the aminoacyl-tRNA.EF-Tu.GTP complex up to the GTP hydrolysis stage on the ribosome. The polypeptide is Elongation factor Ts (Paraburkholderia phymatum (strain DSM 17167 / CIP 108236 / LMG 21445 / STM815) (Burkholderia phymatum)).